The primary structure comprises 402 residues: S-adenosylmethionine synthase (402 aa).

137-142 (GQGSAD) is a binding site for ATP.

It belongs to the AdoMet synthase 2 family. It depends on Mg(2+) as a cofactor.

It catalyses the reaction L-methionine + ATP + H2O = S-adenosyl-L-methionine + phosphate + diphosphate. It participates in amino-acid biosynthesis; S-adenosyl-L-methionine biosynthesis; S-adenosyl-L-methionine from L-methionine: step 1/1. Catalyzes the formation of S-adenosylmethionine from methionine and ATP. This chain is S-adenosylmethionine synthase, found in Pyrobaculum calidifontis (strain DSM 21063 / JCM 11548 / VA1).